We begin with the raw amino-acid sequence, 384 residues long: MATQDFYQVLGVSKDANERDIKKAYKRMAMKYHPDRTEGDKDMEIKFKEIKQAYEVLSDPQKRQMYDQYGHEAFEQARQGGAGHGAGGFGGGGADFADIFGDVFGDIFGGGRRQQARAQRGADLRYNLDMSLEEAVRGKTVELEIPTLVECRDCNGSGAKKGSKPQTCGHCHGSGQIQMRQGFFAVQQTCPQCRGTGTIIKDPCRTCHGHGRKEETKTLSVKIPAGVDTGDRIRLANEGEAGEHGAPAGDLYVQVHVREHPIFARDGNNLFCEVPVSFTKAALGGDIEVPTLEGKVKLKVPKETQTGKHFRLRGKGVKSVRTGEVGDLICKVMIETPVNLSSKQRDMLEELEDSMGTGDEAAKFRPKEKGFFDGVKQFFDDLRS.

The J domain maps to 5-70 (DFYQVLGVSK…QKRQMYDQYG (66 aa)). The segment at 138 to 216 (GKTVELEIPT…CHGHGRKEET (79 aa)) adopts a CR-type zinc-finger fold. Residues cysteine 151, cysteine 154, cysteine 168, cysteine 171, cysteine 190, cysteine 193, cysteine 204, and cysteine 207 each coordinate Zn(2+). CXXCXGXG motif repeat units lie at residues 151-158 (CRDCNGSG), 168-175 (CGHCHGSG), 190-197 (CPQCRGTG), and 204-211 (CRTCHGHG).

It belongs to the DnaJ family. In terms of assembly, homodimer. Requires Zn(2+) as cofactor.

It localises to the cytoplasm. Its function is as follows. Participates actively in the response to hyperosmotic and heat shock by preventing the aggregation of stress-denatured proteins and by disaggregating proteins, also in an autonomous, DnaK-independent fashion. Unfolded proteins bind initially to DnaJ; upon interaction with the DnaJ-bound protein, DnaK hydrolyzes its bound ATP, resulting in the formation of a stable complex. GrpE releases ADP from DnaK; ATP binding to DnaK triggers the release of the substrate protein, thus completing the reaction cycle. Several rounds of ATP-dependent interactions between DnaJ, DnaK and GrpE are required for fully efficient folding. Also involved, together with DnaK and GrpE, in the DNA replication of plasmids through activation of initiation proteins. The chain is Chaperone protein DnaJ from Idiomarina loihiensis (strain ATCC BAA-735 / DSM 15497 / L2-TR).